A 375-amino-acid chain; its full sequence is Cobalt-precorrin-5B C(1)-methyltransferase (375 aa).

It belongs to the CbiD family.

It catalyses the reaction Co-precorrin-5B + S-adenosyl-L-methionine = Co-precorrin-6A + S-adenosyl-L-homocysteine. It functions in the pathway cofactor biosynthesis; adenosylcobalamin biosynthesis; cob(II)yrinate a,c-diamide from sirohydrochlorin (anaerobic route): step 6/10. Functionally, catalyzes the methylation of C-1 in cobalt-precorrin-5B to form cobalt-precorrin-6A. This chain is Cobalt-precorrin-5B C(1)-methyltransferase, found in Paracidovorax citrulli (strain AAC00-1) (Acidovorax citrulli).